Here is a 292-residue protein sequence, read N- to C-terminus: Ribosomal RNA small subunit methyltransferase A (292 aa).

Residues N28, L30, G55, E76, D101, and N126 each contribute to the S-adenosyl-L-methionine site.

It belongs to the class I-like SAM-binding methyltransferase superfamily. rRNA adenine N(6)-methyltransferase family. RsmA subfamily.

The protein localises to the cytoplasm. It carries out the reaction adenosine(1518)/adenosine(1519) in 16S rRNA + 4 S-adenosyl-L-methionine = N(6)-dimethyladenosine(1518)/N(6)-dimethyladenosine(1519) in 16S rRNA + 4 S-adenosyl-L-homocysteine + 4 H(+). Its function is as follows. Specifically dimethylates two adjacent adenosines (A1518 and A1519) in the loop of a conserved hairpin near the 3'-end of 16S rRNA in the 30S particle. May play a critical role in biogenesis of 30S subunits. The protein is Ribosomal RNA small subunit methyltransferase A of Bacillus mycoides (strain KBAB4) (Bacillus weihenstephanensis).